The sequence spans 104 residues: UPF0147 protein MK1586 (104 aa).

This sequence belongs to the UPF0147 family.

The sequence is that of UPF0147 protein MK1586 from Methanopyrus kandleri (strain AV19 / DSM 6324 / JCM 9639 / NBRC 100938).